Here is a 506-residue protein sequence, read N- to C-terminus: Glycine--tRNA ligase (506 aa).

Substrate contacts are provided by Arg99 and Glu189. ATP contacts are provided by residues 221–223 (RNE), 231–236 (FRVREF), 305–306 (EL), and 364–367 (GVDR). Position 236–240 (236–240 (FEQME)) interacts with substrate. 360 to 364 (EPSAG) lines the substrate pocket.

It belongs to the class-II aminoacyl-tRNA synthetase family. Homodimer.

The protein resides in the cytoplasm. It carries out the reaction tRNA(Gly) + glycine + ATP = glycyl-tRNA(Gly) + AMP + diphosphate. In terms of biological role, catalyzes the attachment of glycine to tRNA(Gly). The polypeptide is Glycine--tRNA ligase (Thermus thermophilus (strain ATCC BAA-163 / DSM 7039 / HB27)).